The following is a 150-amino-acid chain: Transcription antitermination protein NusB (150 aa).

Belongs to the NusB family.

Functionally, involved in transcription antitermination. Required for transcription of ribosomal RNA (rRNA) genes. Binds specifically to the boxA antiterminator sequence of the ribosomal RNA (rrn) operons. This chain is Transcription antitermination protein NusB, found in Streptococcus pyogenes serotype M2 (strain MGAS10270).